The following is a 204-amino-acid chain: Venom allergen 5 (204 aa).

4 disulfides stabilise this stretch: Cys-4/Cys-17, Cys-8/Cys-101, Cys-26/Cys-94, and Cys-170/Cys-187. Residues 45–189 (LKEHNDFRQK…WHKHYLVCNY (145 aa)) enclose the SCP domain.

Belongs to the CRISP family. Venom allergen 5-like subfamily. In terms of tissue distribution, expressed by the venom gland.

It is found in the secreted. In Vespula pensylvanica (Western yellow jacket), this protein is Venom allergen 5.